The primary structure comprises 512 residues: Oryzalexin E synthase (512 aa).

A helical membrane pass occupies residues 6–26 (SELWMTAVATCMSLLLYLTIL). Cysteine 452 provides a ligand contact to heme.

This sequence belongs to the cytochrome P450 family. The cofactor is heme.

The protein resides in the membrane. It carries out the reaction ent-sandaracopimaradien-3beta-ol + reduced [NADPH--hemoprotein reductase] + O2 = oryzalexin E + oxidized [NADPH--hemoprotein reductase] + H2O + H(+). Enzyme of the diterpenoid metabolism involved in the biosynthesis of the oryzalexin class of phytoalexins. Can use ent-sandaracopimaradien and syn-stemodene as substrates, but no activity with syn-stemoden-19-oic acid. Hydroxylates 3-alpha-hydroxy-ent-sandaracopimaradiene at C-9-beta, resulting in a 3-alpha,9-beta-diol corresponding to oryzalexins E. The polypeptide is Oryzalexin E synthase (Oryza sativa subsp. japonica (Rice)).